Here is a 562-residue protein sequence, read N- to C-terminus: Protein wntless (562 aa).

The Cytoplasmic segment spans residues 1 to 13; sequence MSGTILENLSGRK. A helical membrane pass occupies residues 14 to 34; that stretch reads LSILVATLLLCQVLCFLLGGL. Residues 35–239 lie on the Lumenal side of the membrane; that stretch reads YAPLPAGHVT…AIHQNGGFTQ (205 aa). N58 carries an N-linked (GlcNAc...) asparagine glycan. The chain crosses the membrane as a helical span at residues 240–260; the sequence is IWLLLKTMLFPFVVGIMIWFW. Residues 261-270 are Cytoplasmic-facing; sequence RRVHLLQRSP. A helical membrane pass occupies residues 271–291; the sequence is ALLEYMLIYLGAALTFLNLPL. The Lumenal segment spans residues 292–311; the sequence is EYLSLVYEMPYMLLLSDIRQ. The helical transmembrane segment at 312-332 threads the bilayer; the sequence is GIFYAMLLTFWLVFAGEHMLI. Over 333 to 344 the chain is Cytoplasmic; the sequence is QDAPNKSTIRSR. The helical transmembrane segment at 345–365 threads the bilayer; the sequence is YWKHLSAVVVGCISLFVFDIC. The Lumenal segment spans residues 366–390; sequence ERGVQLRNPFYSIWTTPLGAKVAMT. The chain crosses the membrane as a helical span at residues 391–411; it reads FIVLAGVSAAIYFLFLCYMIW. Residues 412 to 441 are Cytoplasmic-facing; sequence KVFRNIGDKRTSLPSMSQARRLHYEGLIYR. The chain crosses the membrane as a helical span at residues 442-462; the sequence is FKFLMLATLVCAALTVAGFIM. At 463–482 the chain is on the lumenal side; the sequence is GQMAEGQWDWNDNVAIQPTS. A helical membrane pass occupies residues 483–503; the sequence is AFLTGVYGMWNIYIFALLILY. The Cytoplasmic portion of the chain corresponds to 504–562; it reads APSHKQWPAMHHSDETTQSNENIVASAASEEIEFSHLPSDSNPSEISSLTSFTRKVAFD.

It belongs to the wntless family. Interacts with wg; in the Golgi. Interacts with Vps35, a component of the retromer complex; wls stability is regulated by Vps35.

The protein localises to the presynaptic cell membrane. It localises to the postsynaptic cell membrane. It is found in the cell membrane. Its subcellular location is the endoplasmic reticulum membrane. The protein resides in the endosome membrane. The protein localises to the golgi apparatus membrane. Functionally, a segment polarity gene required for wingless (wg)-dependent patterning processes, acting in both wg-sending cells and wg-target cells. In non-neuronal cells wls directs wg secretion. The wls traffic loop encompasses the Golgi, the cell surface, an endocytic compartment and a retrograde route leading back to the Golgi, and involves clathrin-mediated endocytosis and the retromer complex (a conserved protein complex consisting of Vps35 and Vps26). In neuronal cells (the larval motorneuron NMJ), the wg signal moves across the synapse via the release of wls-containing exosome-like vesicles. Postsynaptic wls is required for the trafficking of fz2 through the fz2-interacting protein Grip. The protein is Protein wntless of Drosophila sechellia (Fruit fly).